The primary structure comprises 155 residues: Endoribonuclease YbeY (155 aa).

Residues H113, H117, and H123 each coordinate Zn(2+).

This sequence belongs to the endoribonuclease YbeY family. Zn(2+) serves as cofactor.

It localises to the cytoplasm. Single strand-specific metallo-endoribonuclease involved in late-stage 70S ribosome quality control and in maturation of the 3' terminus of the 16S rRNA. The sequence is that of Endoribonuclease YbeY from Ureaplasma urealyticum serovar 10 (strain ATCC 33699 / Western).